Consider the following 194-residue polypeptide: Protein GrpE (194 aa).

Over residues 1 to 12 (MNKQKNNRERTP) the composition is skewed to basic and acidic residues. A disordered region spans residues 1–44 (MNKQKNNRERTPQPEQDTERDEQLTNSHENDIDSAPAAEENDKV).

The protein belongs to the GrpE family. In terms of assembly, homodimer.

It is found in the cytoplasm. Functionally, participates actively in the response to hyperosmotic and heat shock by preventing the aggregation of stress-denatured proteins, in association with DnaK and GrpE. It is the nucleotide exchange factor for DnaK and may function as a thermosensor. Unfolded proteins bind initially to DnaJ; upon interaction with the DnaJ-bound protein, DnaK hydrolyzes its bound ATP, resulting in the formation of a stable complex. GrpE releases ADP from DnaK; ATP binding to DnaK triggers the release of the substrate protein, thus completing the reaction cycle. Several rounds of ATP-dependent interactions between DnaJ, DnaK and GrpE are required for fully efficient folding. In Porphyromonas gingivalis (strain ATCC BAA-308 / W83), this protein is Protein GrpE.